The primary structure comprises 85 residues: Actobindin homolog (85 aa).

Residues 35 to 52 enclose the WH2 domain; the sequence is DRNELLSGIKEGKELKKA.

Its function is as follows. Is able to bind two actin monomers at high concentrations of G-actin. The sequence is that of Actobindin homolog from Entamoeba histolytica.